The following is a 216-amino-acid chain: Ribonuclease T (216 aa).

The region spanning 28-202 (VVVDVETGGF…YDTEQTARLF (175 aa)) is the Exonuclease domain. 4 residues coordinate Mg(2+): D31, E33, H189, and D194. The active-site Proton donor/acceptor is H189.

This sequence belongs to the RNase T family. Homodimer. Requires Mg(2+) as cofactor.

Functionally, trims short 3' overhangs of a variety of RNA species, leaving a one or two nucleotide 3' overhang. Responsible for the end-turnover of tRNA: specifically removes the terminal AMP residue from uncharged tRNA (tRNA-C-C-A). Also appears to be involved in tRNA biosynthesis. This Xanthomonas campestris pv. campestris (strain 8004) protein is Ribonuclease T.